The primary structure comprises 1020 residues: Tetrathionate reductase subunit A (1020 aa).

Residues methionine 1–alanine 33 constitute a signal peptide (tat-type signal). Positions glutamine 71–leucine 154 constitute a 4Fe-4S Mo/W bis-MGD-type domain. [4Fe-4S] cluster contacts are provided by cysteine 78, cysteine 81, cysteine 85, and cysteine 140.

Belongs to the prokaryotic molybdopterin-containing oxidoreductase family. In terms of assembly, probably composed of three subunits: TtrA, TtrB and TtrC. The cofactor is [4Fe-4S] cluster. It depends on Mo-bis(molybdopterin guanine dinucleotide) as a cofactor. In terms of processing, predicted to be exported by the Tat system. The position of the signal peptide cleavage has not been experimentally proven.

It is found in the periplasm. The protein localises to the cell inner membrane. Functionally, part of a membrane-bound tetrathionate reductase that catalyzes the reduction of tetrathionate to thiosulfate. TtrA is the catalytic subunit. During mice infection, the ability to use tetrathionate as an electron acceptor is a growth advantage for S.typhimurium over the competing microbiota in the lumen of the inflamed gut. This chain is Tetrathionate reductase subunit A (ttrA), found in Salmonella typhimurium (strain LT2 / SGSC1412 / ATCC 700720).